Here is a 144-residue protein sequence, read N- to C-terminus: Transcription antitermination protein NusB (144 aa).

It belongs to the NusB family.

In terms of biological role, involved in transcription antitermination. Required for transcription of ribosomal RNA (rRNA) genes. Binds specifically to the boxA antiterminator sequence of the ribosomal RNA (rrn) operons. The protein is Transcription antitermination protein NusB of Streptococcus agalactiae serotype Ia (strain ATCC 27591 / A909 / CDC SS700).